We begin with the raw amino-acid sequence, 319 residues long: Acetyl-coenzyme A carboxylase carboxyl transferase subunit alpha (319 aa).

The CoA carboxyltransferase C-terminal domain occupies 35–292; that stretch reads EISKLMRRLV…KKTIAEALAE (258 aa).

This sequence belongs to the AccA family. Acetyl-CoA carboxylase is a heterohexamer composed of biotin carboxyl carrier protein (AccB), biotin carboxylase (AccC) and two subunits each of ACCase subunit alpha (AccA) and ACCase subunit beta (AccD).

Its subcellular location is the cytoplasm. The enzyme catalyses N(6)-carboxybiotinyl-L-lysyl-[protein] + acetyl-CoA = N(6)-biotinyl-L-lysyl-[protein] + malonyl-CoA. Its pathway is lipid metabolism; malonyl-CoA biosynthesis; malonyl-CoA from acetyl-CoA: step 1/1. Component of the acetyl coenzyme A carboxylase (ACC) complex. First, biotin carboxylase catalyzes the carboxylation of biotin on its carrier protein (BCCP) and then the CO(2) group is transferred by the carboxyltransferase to acetyl-CoA to form malonyl-CoA. This Desulfitobacterium hafniense (strain DSM 10664 / DCB-2) protein is Acetyl-coenzyme A carboxylase carboxyl transferase subunit alpha.